Reading from the N-terminus, the 137-residue chain is Bombinin-like peptides 1 (137 aa).

The first 18 residues, methionine 1 to alanine 18, serve as a signal peptide directing secretion. Asparagine 70 carries the post-translational modification Asparagine amide. The segment at leucine 91–glutamate 112 is disordered. Isoleucine 118 is subject to D-allo-isoleucine. Isoleucine 136 carries the post-translational modification Isoleucine amide.

Belongs to the bombinin family. Expressed by the skin glands.

The protein resides in the secreted. Functionally, has antimicrobial activity, but no hemolytic activity. Preliminary evidence indicates that this peptide does not lyse and thus kill the bacteria by its antimicrobial activity. In terms of biological role, bombinin H has antibacterial and hemolytic activity. This chain is Bombinin-like peptides 1, found in Bombina variegata (Yellow-bellied toad).